The sequence spans 378 residues: MALARDPTGAEIARFIATRTGAQMVQLMRCIKEPAAQAAFTAKLLVAPPAMSGRPATPEKARKALNAFVGFRCYYITIPMFKPWPMKKLSNLIGLLWEADPNKSLWSLMAKPWSTIRDQIGKDQAPLDQFFRIICPHLKLPDPASYLEIHGWTLAVNEEGDPIISRSADSEFASVGTGNTDMAISVEDIITYGQSLGYAHGFILDNKPSSTFLGQSVSSTLEKNISAISITEGTSKAAHARFLIRNKRRAKRQTLRNAGYRASLDQDILNGHQLDPAPVDENMPDCYSTTAPVLDQSPNKFYGGLTTLLSDQISTGQGDADHLDNAYLFNDCSLSGNAPFMTIAGFTTNMPNLTDYGAFRLGADEDVTLPIFDDITHI.

The segment at residues 60–117 (KARKALNAFVGFRCYYITIPMFKPWPMKKLSNLIGLLWEADPNKSLWSLMAKPWSTIR) is a DNA-binding region (alpha box).

This sequence belongs to the MATALPHA1 family.

It is found in the nucleus. Its function is as follows. Mating type proteins are sequence specific DNA-binding proteins that act as master switches in fungal differentiation by controlling gene expression in a cell type-specific fashion. Transcriptional activator that induces the transcription of alpha-specific genes. The protein is Mating-type protein MAT-1 (MAT1) of Cochliobolus sativus (Common root rot and spot blotch fungus).